The following is a 348-amino-acid chain: 4-hydroxy-3-methylbut-2-en-1-yl diphosphate synthase (flavodoxin) (348 aa).

C263, C266, C298, and E305 together coordinate [4Fe-4S] cluster.

This sequence belongs to the IspG family. Requires [4Fe-4S] cluster as cofactor.

The catalysed reaction is (2E)-4-hydroxy-3-methylbut-2-enyl diphosphate + oxidized [flavodoxin] + H2O + 2 H(+) = 2-C-methyl-D-erythritol 2,4-cyclic diphosphate + reduced [flavodoxin]. The protein operates within isoprenoid biosynthesis; isopentenyl diphosphate biosynthesis via DXP pathway; isopentenyl diphosphate from 1-deoxy-D-xylulose 5-phosphate: step 5/6. Functionally, converts 2C-methyl-D-erythritol 2,4-cyclodiphosphate (ME-2,4cPP) into 1-hydroxy-2-methyl-2-(E)-butenyl 4-diphosphate. The polypeptide is 4-hydroxy-3-methylbut-2-en-1-yl diphosphate synthase (flavodoxin) (Dehalococcoides mccartyi (strain ATCC BAA-2100 / JCM 16839 / KCTC 5957 / BAV1)).